The chain runs to 387 residues: MGNSSATEDGGLLAGRGPESLGTGAGLGGAGAAALVGGVLLIGLVLAGNSLVCVSVASERTLQTPTNYFIVSLAAADLLLAVLVLPLFVYSEVQGGVWLLSPRLCDTLMAMDVMLCTASIFNLCAISVDRFVAVTVPLRYNQQGQCQLLLIAATWLLSAAVASPVVCGLNDVPGRDPAVCCLENRDYVVYSSVCSFFLPCPLMLLLYWATFRGLRRWEAARHTKLHSRAPRRPSGPGPPVSDPTQGPFFPDCPPPLPSLRTSPSDSSRPESELSQRPCSPGCLLADAALPQPPEPSSRRRRGAKITGRERKAMRVLPVVVGAFLVCWTPFFVVHITRALCPACFVSPRLVSAVTWLGYVNSALNPIIYTIFNAEFRSVFRKTLRLRC.

The Extracellular segment spans residues 1–34 (MGNSSATEDGGLLAGRGPESLGTGAGLGGAGAAA). A glycan (N-linked (GlcNAc...) asparagine) is linked at Asn-3. Residues 35–57 (LVGGVLLIGLVLAGNSLVCVSVA) traverse the membrane as a helical segment. The Cytoplasmic segment spans residues 58-67 (SERTLQTPTN). The chain crosses the membrane as a helical span at residues 68–90 (YFIVSLAAADLLLAVLVLPLFVY). Asp-77 provides a ligand contact to Na(+). The Extracellular portion of the chain corresponds to 91-106 (SEVQGGVWLLSPRLCD). Cysteines 105 and 180 form a disulfide. A helical transmembrane segment spans residues 107–128 (TLMAMDVMLCTASIFNLCAISV). Position 119 (Ser-119) interacts with Na(+). At 129 to 146 (DRFVAVTVPLRYNQQGQC) the chain is on the cytoplasmic side. The helical transmembrane segment at 147-170 (QLLLIAATWLLSAAVASPVVCGLN) threads the bilayer. The Extracellular segment spans residues 171–186 (DVPGRDPAVCCLENRD). Residues 187 to 208 (YVVYSSVCSFFLPCPLMLLLYW) traverse the membrane as a helical segment. The Cytoplasmic portion of the chain corresponds to 209 to 314 (ATFRGLRRWE…ITGRERKAMR (106 aa)). Disordered stretches follow at residues 224–247 (KLHS…TQGP) and 287–306 (AALP…AKIT). The helical transmembrane segment at 315–337 (VLPVVVGAFLVCWTPFFVVHITR) threads the bilayer. Topologically, residues 338–346 (ALCPACFVS) are extracellular. A disulfide bridge links Cys-340 with Cys-343. Residues 347–369 (PRLVSAVTWLGYVNSALNPIIYT) form a helical membrane-spanning segment. Residues 370-387 (IFNAEFRSVFRKTLRLRC) are Cytoplasmic-facing. A lipid anchor (S-palmitoyl cysteine) is attached at Cys-387.

This sequence belongs to the G-protein coupled receptor 1 family. In terms of assembly, forms homo- and heterooligomers with DRD2. D4.7 allele exhibits higher affinity for homodimers compared to DRD2 heterodimers, while alleles D42. and 4.4 have similar affinities for both. The interaction with DRD2 may modulate agonist-induced downstream signaling. Interacts with CLIC6. Interacts with GPRASP1. May interact with ADORA2A. Interacts with KLHL12. In terms of processing, palmitoylated. Palmitoylation of the C-terminal Cys is important for normal expression at the cell membrane. In terms of tissue distribution, detected in olfactory bulb, hypothalamus, olfactory tubercle, brainstem and striatum.

The protein localises to the cell membrane. Its function is as follows. Dopamine receptor responsible for neuronal signaling in the mesolimbic system of the brain, an area of the brain that regulates emotion and complex behavior. Activated by dopamine, but also by epinephrine and norepinephrine, and by numerous synthetic agonists and drugs. Agonist binding triggers signaling via G proteins that inhibit adenylyl cyclase. Modulates the circadian rhythm of contrast sensitivity by regulating the rhythmic expression of NPAS2 in the retinal ganglion cells. This Mus musculus (Mouse) protein is D(4) dopamine receptor (Drd4).